The chain runs to 116 residues: Ribonuclease P protein component (116 aa).

Belongs to the RnpA family. In terms of assembly, consists of a catalytic RNA component (M1 or rnpB) and a protein subunit.

It carries out the reaction Endonucleolytic cleavage of RNA, removing 5'-extranucleotides from tRNA precursor.. In terms of biological role, RNaseP catalyzes the removal of the 5'-leader sequence from pre-tRNA to produce the mature 5'-terminus. It can also cleave other RNA substrates such as 4.5S RNA. The protein component plays an auxiliary but essential role in vivo by binding to the 5'-leader sequence and broadening the substrate specificity of the ribozyme. This is Ribonuclease P protein component from Leuconostoc citreum (strain KM20).